Reading from the N-terminus, the 104-residue chain is Small ribosomal subunit protein uS10 (104 aa).

It belongs to the universal ribosomal protein uS10 family. In terms of assembly, part of the 30S ribosomal subunit.

Involved in the binding of tRNA to the ribosomes. This chain is Small ribosomal subunit protein uS10, found in Nitrosococcus oceani (strain ATCC 19707 / BCRC 17464 / JCM 30415 / NCIMB 11848 / C-107).